The following is a 76-amino-acid chain: U-scoloptoxin(13)-Sm1a (76 aa).

The first 22 residues, 1–22 (MAYICAXTLAFLLCVNTGIIQA), serve as a signal peptide directing secretion.

It belongs to the scoloptoxin-13 family. In terms of processing, contains 4 disulfide bonds. Expressed by the venom gland.

It localises to the secreted. This Scolopendra morsitans (Tanzanian blue ringleg centipede) protein is U-scoloptoxin(13)-Sm1a.